A 676-amino-acid chain; its full sequence is MTYEGAIGIDLGTTYSCVGVWQNERVEIIANDQGNRTTPSYVAFVNNEVLVGDAAKSHAARGSNGVIFDAKRLIGRKFSDSVVQSDMKHWPFKVEEGEKGGAVMRVEHLGEGMLLQPEQISARVLAYLKSCAESYLGKQVAKAVVTVPAYFNDSQRQATKDAGTIAGLEVLRIINEPTAAAIAYGLDKADEGKERNVLVFDFGGGTFDVSIISVSGGVFEVKATNGDTHLGGEDVDAALLEHALADIRNRYGIEQGSLSQKMLSKLRSRCEEVKRVLSHSTVGEIALDGLLPDGEEYVLKLTRARLEELCTKIFARCLSVVQRALKDASMKVEDIEDVVLVGGSSRIPAVQAQLRELFRGKQLCSSVHPDEAVAYGAAWQAHVLSGGYGESSRTAGIVLLDVVPLSIGVEVDDGKFDVIIRRNTTIPYLATKEYSTVDDNQSEVEIQVFEGERPLTRHNHRLGSFVLDGITPAKHGEPTITVTFSVDADGILTVTAAEELGSVTKTLVVENSERLTSEEVQKMIEVAQKFALTDATALARMEATERLTQWFDRLEAVMETVPQPYSEKLQKRIAFLPHGKEWVGTQLHTYTDAASIEAKVAKIERLAKRALKSARREGKDGWAPGNEDNGSGDDNDGDDNSDEEDELQRGRGVTEGSGRSPIRKRDRIEAINANTE.

Residues 613–676 are disordered; sequence SARREGKDGW…RIEAINANTE (64 aa). The segment covering 630 to 646 has biased composition (acidic residues); sequence GSGDDNDGDDNSDEEDE.

The protein belongs to the heat shock protein 70 family.

The chain is Heat shock cognate HSP70 protein from Trypanosoma brucei brucei.